Consider the following 1186-residue polypeptide: Probable inactive serine/threonine-protein kinase DDB_G0293184 (1186 aa).

A compositionally biased stretch (acidic residues) spans 1 to 12; sequence MEQEDQQYEEDS. Disordered regions lie at residues 1–55 and 99–122; these read MEQE…NNDS and MEQQ…NTNF. 2 stretches are compositionally biased toward low complexity: residues 34-48 and 99-110; these read TTTE…TTPT and MEQQQQQQHLQP. The Protein kinase domain maps to 173-437; it reads YESPPTLGKY…VHDLLRHPWL (265 aa). ATP is bound by residues 179-187 and K205; that span reads LGKYDKVIL. Disordered regions lie at residues 447–468 and 530–551; these read SSSS…GNVN and YNNY…NECG. Over residues 453 to 468 the composition is skewed to polar residues; that stretch reads QAHPTVQSNNLNGNVN. A compositionally biased stretch (low complexity) spans 530-545; it reads YNNYNNNNNNNNNTND. Residues 631-659 are a coiled coil; it reads LKRTNQMANDLGRKYEILQSNIKRLEDYL. Over residues 766-784 the composition is skewed to polar residues; sequence NNLDPSNNNESVNLSTSPG. 2 disordered regions span residues 766–911 and 959–988; these read NNLD…NGNN and ENKK…GDVS. Residues 785–836 are compositionally biased toward low complexity; the sequence is SLVNSNSNPSISNSLNNNNNNNNNNNNNNNGNPNVIITTNNNCNSNSNGNNI. The segment covering 847 to 896 has biased composition (basic and acidic residues); that stretch reads KEVKEGKEIKEIKEPKEKDKDKEKDKDKEKDKDKEKDKDKEKEKDKDKEN. Residues 875–909 adopt a coiled-coil conformation; sequence EKDKDKEKDKDKEKEKDKDKENNNNNNSNNNNNNG. Over residues 897 to 911 the composition is skewed to low complexity; the sequence is NNNNNSNNNNNNGNN. A compositionally biased stretch (polar residues) spans 969-978; the sequence is LDSTNKQSPG. The Rho-GAP domain maps to 1004–1186; that stretch reads VRLDDLMTRE…LSFPKFNLSV (183 aa).

This sequence belongs to the protein kinase superfamily. STE Ser/Thr protein kinase family.

In Dictyostelium discoideum (Social amoeba), this protein is Probable inactive serine/threonine-protein kinase DDB_G0293184.